A 131-amino-acid polypeptide reads, in one-letter code: Gem-associated protein 7 (131 aa).

Met1 carries the N-acetylmethionine modification. In terms of domain architecture, SUZ-C spans 1 to 29 (MQTPVNIPVPVLRLPRGPDGFSRGFAPDG). At Thr3 the chain carries Phosphothreonine. One can recognise a Sm domain in the interval 65–131 (RYLRSLLAMV…SDIISYTFKP (67 aa)).

It belongs to the gemin-7 family. In terms of assembly, part of the core SMN complex that contains SMN1, GEMIN2/SIP1, DDX20/GEMIN3, GEMIN4, GEMIN5, GEMIN6, GEMIN7, GEMIN8 and STRAP/UNRIP. Part of the SMN-Sm complex that contains SMN1, GEMIN2/SIP1, DDX20/GEMIN3, GEMIN4, GEMIN5, GEMIN6, GEMIN7, GEMIN8, STRAP/UNRIP and the Sm proteins SNRPB, SNRPD1, SNRPD2, SNRPD3, SNRPE, SNRPF and SNRPG. Interacts with GEMIN6; the interaction is direct. Interacts with STRAP/UNRIP; the interaction is direct. Interacts with GEMIN8; the interaction is direct. Interacts with SNRPB, SNRPD2, SNRPD3 and SNRPE; the interaction is direct.

The protein localises to the nucleus. It localises to the nucleoplasm. Its subcellular location is the gem. It is found in the cytoplasm. In terms of biological role, the SMN complex catalyzes the assembly of small nuclear ribonucleoproteins (snRNPs), the building blocks of the spliceosome, and thereby plays an important role in the splicing of cellular pre-mRNAs. Most spliceosomal snRNPs contain a common set of Sm proteins SNRPB, SNRPD1, SNRPD2, SNRPD3, SNRPE, SNRPF and SNRPG that assemble in a heptameric protein ring on the Sm site of the small nuclear RNA to form the core snRNP (Sm core). In the cytosol, the Sm proteins SNRPD1, SNRPD2, SNRPE, SNRPF and SNRPG are trapped in an inactive 6S pICln-Sm complex by the chaperone CLNS1A that controls the assembly of the core snRNP. To assemble core snRNPs, the SMN complex accepts the trapped 5Sm proteins from CLNS1A forming an intermediate. Binding of snRNA inside 5Sm triggers eviction of the SMN complex, thereby allowing binding of SNRPD3 and SNRPB to complete assembly of the core snRNP. The polypeptide is Gem-associated protein 7 (GEMIN7) (Homo sapiens (Human)).